A 695-amino-acid chain; its full sequence is Elongation factor G 1 (695 aa).

The region spanning Ser6–Thr284 is the tr-type G domain. GTP-binding positions include Ala15–Thr22, Asp82–His86, and Asn136–Asp139.

It belongs to the TRAFAC class translation factor GTPase superfamily. Classic translation factor GTPase family. EF-G/EF-2 subfamily.

Its subcellular location is the cytoplasm. Functionally, catalyzes the GTP-dependent ribosomal translocation step during translation elongation. During this step, the ribosome changes from the pre-translocational (PRE) to the post-translocational (POST) state as the newly formed A-site-bound peptidyl-tRNA and P-site-bound deacylated tRNA move to the P and E sites, respectively. Catalyzes the coordinated movement of the two tRNA molecules, the mRNA and conformational changes in the ribosome. The chain is Elongation factor G 1 from Desulfotalea psychrophila (strain LSv54 / DSM 12343).